The primary structure comprises 20 residues: Mu-conotoxin SIIIB (20 aa).

At Gln1 the chain carries Pyrrolidone carboxylic acid. 3 cysteine pairs are disulfide-bonded: Cys3–Cys13, Cys4–Cys19, and Cys8–Cys20. Residue Cys20 is modified to Cysteine amide.

Expressed by the venom duct.

Its subcellular location is the secreted. Its function is as follows. Mu-conotoxins block voltage-gated sodium channels (VGSC). Potently displaces (125)I-TIIIA from native rat brain Nav1.2/SCN2A (IC(50) is 5 nM) and muscle Nav1.4/SCN4A (IC(50) is 3 nM) VGSCs. Potently and irreversibly inhibits current through Xenopus oocyte-expressed Nav1.2/SCN2A and Nav1.4/SCN4A. In Conus striatus (Striated cone), this protein is Mu-conotoxin SIIIB.